An 84-amino-acid chain; its full sequence is MISIKVLFFGEACQLVGKREEAIDFPEETDYEEIRKTILENYPALQKIEKVMMLAVDQEYANPGDRFELVRFTEIAVIPPLSGG.

Glycine 84 is subject to 1-thioglycine; alternate. Glycine 84 is modified (glycyl adenylate; alternate).

Belongs to the MoaD family. MOCS2A subfamily. Heterotetramer; composed of 2 small (MOCS2A) and 2 large (MOCS2B) subunits. In terms of processing, C-terminal thiocarboxylation occurs in 2 steps, it is first acyl-adenylated (-COAMP) via the hesA/moeB/thiF part of MOCS3, then thiocarboxylated (-COSH) via the rhodanese domain of MOCS3.

The protein localises to the cytoplasm. It functions in the pathway cofactor biosynthesis; molybdopterin biosynthesis. In terms of biological role, acts as a sulfur carrier required for molybdopterin biosynthesis. Component of the molybdopterin synthase complex that catalyzes the conversion of precursor Z into molybdopterin by mediating the incorporation of 2 sulfur atoms into precursor Z to generate a dithiolene group. In the complex, serves as sulfur donor by being thiocarboxylated (-COSH) at its C-terminus by MOCS3. After interaction with MOCS2B, the sulfur is then transferred to precursor Z to form molybdopterin. The polypeptide is Molybdopterin synthase sulfur carrier subunit (Caenorhabditis elegans).